The primary structure comprises 460 residues: Elongation factor 1-alpha 3 (460 aa).

The region spanning 6 to 243 is the tr-type G domain; it reads KTHINIVVIG…DCIIPPQRPT (238 aa). A G1 region spans residues 15-22; that stretch reads GHVDSGKS. The G2 stretch occupies residues 71-75; sequence GITID. Residues 92 to 95 are G3; that stretch reads DAPG. A G4 region spans residues 154-157; sequence NKMD. The G5 stretch occupies residues 195-197; sequence SGF. Glutamate 302 and glutamate 375 each carry 5-glutamyl glycerylphosphorylethanolamine.

It belongs to the TRAFAC class translation factor GTPase superfamily. Classic translation factor GTPase family. EF-Tu/EF-1A subfamily.

It is found in the cytoplasm. In terms of biological role, this protein promotes the GTP-dependent binding of aminoacyl-tRNA to the A-site of ribosomes during protein biosynthesis. The protein is Elongation factor 1-alpha 3 (eft-3) of Oscheius tipulae.